A 332-amino-acid polypeptide reads, in one-letter code: L-lactate dehydrogenase A chain (332 aa).

NAD(+) contacts are provided by residues 29 to 57 (GAVGMACAISILMKDLADELALVDVIEDK) and R99. Residues R106, N138, and R169 each contribute to the substrate site. N138 is an NAD(+) binding site. H193 serves as the catalytic Proton acceptor. T248 contributes to the substrate binding site.

It belongs to the LDH/MDH superfamily. LDH family. Homotetramer.

Its subcellular location is the cytoplasm. The catalysed reaction is (S)-lactate + NAD(+) = pyruvate + NADH + H(+). It functions in the pathway fermentation; pyruvate fermentation to lactate; (S)-lactate from pyruvate: step 1/1. Its function is as follows. Interconverts simultaneously and stereospecifically pyruvate and lactate with concomitant interconversion of NADH and NAD(+). This is L-lactate dehydrogenase A chain (LDHA) from Sceloporus woodi (Florida scrub lizard).